Reading from the N-terminus, the 330-residue chain is Beta-ketoacyl-[acyl-carrier-protein] synthase III (330 aa).

Residues Cys114 and His254 contribute to the active site. The interval 255–259 (QANLR) is ACP-binding. Asn284 is a catalytic residue.

It belongs to the thiolase-like superfamily. FabH family. In terms of assembly, homodimer.

The protein resides in the cytoplasm. The enzyme catalyses malonyl-[ACP] + acetyl-CoA + H(+) = 3-oxobutanoyl-[ACP] + CO2 + CoA. Its pathway is lipid metabolism; fatty acid biosynthesis. Catalyzes the condensation reaction of fatty acid synthesis by the addition to an acyl acceptor of two carbons from malonyl-ACP. Catalyzes the first condensation reaction which initiates fatty acid synthesis and may therefore play a role in governing the total rate of fatty acid production. Possesses both acetoacetyl-ACP synthase and acetyl transacylase activities. Its substrate specificity determines the biosynthesis of branched-chain and/or straight-chain of fatty acids. This Roseiflexus castenholzii (strain DSM 13941 / HLO8) protein is Beta-ketoacyl-[acyl-carrier-protein] synthase III.